We begin with the raw amino-acid sequence, 278 residues long: Formamidopyrimidine-DNA glycosylase (278 aa).

Catalysis depends on P2, which acts as the Schiff-base intermediate with DNA. The active-site Proton donor is E3. K58 acts as the Proton donor; for beta-elimination activity in catalysis. Residues H92 and R111 each coordinate DNA. The FPG-type zinc finger occupies 239–273; sequence HVYGKKGVPCERCGTPIEKIKVAQRGTHFCPKCQI. The active-site Proton donor; for delta-elimination activity is R263.

Belongs to the FPG family. In terms of assembly, monomer. Zn(2+) is required as a cofactor.

The catalysed reaction is Hydrolysis of DNA containing ring-opened 7-methylguanine residues, releasing 2,6-diamino-4-hydroxy-5-(N-methyl)formamidopyrimidine.. It catalyses the reaction 2'-deoxyribonucleotide-(2'-deoxyribose 5'-phosphate)-2'-deoxyribonucleotide-DNA = a 3'-end 2'-deoxyribonucleotide-(2,3-dehydro-2,3-deoxyribose 5'-phosphate)-DNA + a 5'-end 5'-phospho-2'-deoxyribonucleoside-DNA + H(+). Functionally, involved in base excision repair of DNA damaged by oxidation or by mutagenic agents. Acts as a DNA glycosylase that recognizes and removes damaged bases. Has a preference for oxidized purines, such as 7,8-dihydro-8-oxoguanine (8-oxoG). Has AP (apurinic/apyrimidinic) lyase activity and introduces nicks in the DNA strand. Cleaves the DNA backbone by beta-delta elimination to generate a single-strand break at the site of the removed base with both 3'- and 5'-phosphates. The chain is Formamidopyrimidine-DNA glycosylase from Latilactobacillus sakei subsp. sakei (strain 23K) (Lactobacillus sakei subsp. sakei).